Here is a 113-residue protein sequence, read N- to C-terminus: Hydrogenase maturation factor HypA (113 aa).

Histidine 2 contacts Ni(2+). Zn(2+)-binding residues include cysteine 73, cysteine 76, cysteine 89, and cysteine 92.

Belongs to the HypA/HybF family.

In terms of biological role, involved in the maturation of [NiFe] hydrogenases. Required for nickel insertion into the metal center of the hydrogenase. This is Hydrogenase maturation factor HypA from Legionella pneumophila (strain Paris).